A 407-amino-acid chain; its full sequence is 1-deoxy-D-xylulose 5-phosphate reductoisomerase (407 aa).

NADPH-binding residues include Thr-25, Gly-26, Ser-27, Ile-28, Asn-53, and Asn-136. 1-deoxy-D-xylulose 5-phosphate is bound at residue Lys-137. Position 138 (Glu-138) interacts with NADPH. A Mn(2+)-binding site is contributed by Asp-162. Residues Ser-163, Glu-164, Ser-188, and His-211 each coordinate 1-deoxy-D-xylulose 5-phosphate. Glu-164 contacts Mn(2+). Gly-217 is an NADPH binding site. The 1-deoxy-D-xylulose 5-phosphate site is built by Ser-224, Asn-229, Lys-230, and Glu-233. Glu-233 contacts Mn(2+).

It belongs to the DXR family. It depends on Mg(2+) as a cofactor. The cofactor is Mn(2+).

It catalyses the reaction 2-C-methyl-D-erythritol 4-phosphate + NADP(+) = 1-deoxy-D-xylulose 5-phosphate + NADPH + H(+). It functions in the pathway isoprenoid biosynthesis; isopentenyl diphosphate biosynthesis via DXP pathway; isopentenyl diphosphate from 1-deoxy-D-xylulose 5-phosphate: step 1/6. In terms of biological role, catalyzes the NADPH-dependent rearrangement and reduction of 1-deoxy-D-xylulose-5-phosphate (DXP) to 2-C-methyl-D-erythritol 4-phosphate (MEP). The sequence is that of 1-deoxy-D-xylulose 5-phosphate reductoisomerase from Bradyrhizobium sp. (strain BTAi1 / ATCC BAA-1182).